The chain runs to 395 residues: Putative 8-amino-7-oxononanoate synthase (395 aa).

Residue Arg-23 coordinates substrate. 110 to 111 (GY) contacts pyridoxal 5'-phosphate. His-135 contacts substrate. Residues Ser-182, 207–210 (DEAH), and 239–242 (TFSK) each bind pyridoxal 5'-phosphate. The residue at position 242 (Lys-242) is an N6-(pyridoxal phosphate)lysine. Thr-356 is a binding site for substrate.

The protein belongs to the class-II pyridoxal-phosphate-dependent aminotransferase family. BioF subfamily. In terms of assembly, homodimer. The cofactor is pyridoxal 5'-phosphate.

The enzyme catalyses 6-carboxyhexanoyl-[ACP] + L-alanine + H(+) = (8S)-8-amino-7-oxononanoate + holo-[ACP] + CO2. It participates in cofactor biosynthesis; biotin biosynthesis. Functionally, catalyzes the decarboxylative condensation of pimeloyl-[acyl-carrier protein] and L-alanine to produce 8-amino-7-oxononanoate (AON), [acyl-carrier protein], and carbon dioxide. This is Putative 8-amino-7-oxononanoate synthase (bioF) from Bacillus cereus (strain B4264).